A 241-amino-acid chain; its full sequence is Tumor necrosis factor receptor superfamily member grnd (241 aa).

Residues 1–27 (MSVRKLSALSLSIGGVPLIPSVSLVAA) form the signal peptide. Residues 28 to 98 (ANGESRDCHG…EMLDIQNTQQ (71 aa)) are Extracellular-facing. Intrachain disulfides connect Cys-35-Cys-47, Cys-40-Cys-54, Cys-57-Cys-77, and Cys-61-Cys-73. Asn-63 is a glycosylation site (N-linked (GlcNAc...) asparagine). The helical transmembrane segment at 99-119 (LILLLLTILLVLIALRCAFQF) threads the bilayer. Residues 120–241 (LRWLIGNRCF…PSAATIPVAF (122 aa)) lie on the Cytoplasmic side of the membrane.

In terms of assembly, interacts (via extracellular cysteine-rich domain) with egr (via secreted TNF-homology soluble form); forms heterohexamers when 3 copies associate with egr trimers. Interacts with Traf6/TRAF2 and veli (via PDZ domain). N-glycosylated on Asn-63. Glycosylation regulates ligand binding, specifically reducing affinity for the TNF egr, thereby inhibiting activation of JNK signaling. As to expression, expressed in the adult midgut; under normal conditions expressed at lower levels than the other TNF receptor wgn.

It is found in the apical cell membrane. Its subcellular location is the cytoplasmic vesicle membrane. Its function is as follows. Acts as a receptor for TNF-cytokine egr. Plays a role in activation of JNK signaling and is required for egr-induced apoptosis, including in wing imaginal discs during development. May also play an egr-independent role in cell proliferation. TNF receptor involved in triggering JNK-dependent proliferation of the enteroblast-enterocyte lineage in response to stress-induced release of egr by intestinal stem cells and enteroblasts. Involved in regulation of insulin production in response to dietary protein shortage keeping systemic growth in check. Activation in brain insulin producing cells through binding of egr released into the hemolymph in response to dietary amino acid shortage, results in JNK-dependent inhibition of insulin production. The protein is Tumor necrosis factor receptor superfamily member grnd of Drosophila melanogaster (Fruit fly).